A 43-amino-acid chain; its full sequence is Potassium channel toxin gamma-KTx 4.5 (43 aa).

4 cysteine pairs are disulfide-bonded: C5–C23, C11–C34, C20–C39, and C24–C41.

The protein belongs to the ergtoxin family. Gamma-KTx 4 subfamily. Expressed by the venom gland.

Its subcellular location is the secreted. Functionally, reversibly blocks Kv11/ERG potassium channels. This chain is Potassium channel toxin gamma-KTx 4.5, found in Centruroides exilicauda (Bark scorpion).